A 694-amino-acid chain; its full sequence is MAGDRAEEEEGEAPPPEARAAAAVERVAAAVEAVAAGAGAGAGEYRNAYRRQLLALSRRIRLLGPFVEELRERRRGEGEGEEEERALAPLADALEAALALLRLGREGSRISLVLERDSVMKKFQGVILQLEQALCDIPYNELDISDEVREQVELVHAQLKRAKERIDMPDDEFYNDLLSVYDKNYDPSAELAILGRLSEKLHLMTITDLTQESLALHEMVASGGGQDPGEHIERMSMLLKKIKDFVQTQNPDMGPPMASRVLDSNGDSRPITIPDEFRCPISLELMKDPVIVSTGQTYERACIEKWIASGHHTCPTTQQKMSTSALTPNYVLRSLISQWCETNGMEPPKRSTQPNKPTPACSSSERANIDALLSKLCSPDTEEQRSAAAELRLLAKRNANNRICIAEAGAIPLLLSLLSSSDLRTQEHAVTALLNLSIHEDNKASIISSGAVPSIVHVLKNGSMEARENAAATLFSLSVIDEYKVTIGGMGAIPALVVLLGEGSQRGKKDAAAALFNLCIYQGNKGRAIRAGLVPLIMGLVTNPTGALMDEAMAILSILSSHPEGKAAIGAAEPVPVLVEMIGSGTPRNRENAAAVMLHLCSGEHHLVHLARAQECGIMVPLRELALNGTDRGKRKAVQLLERMSRFLVQQQEEQESQSQASAQVPPQATPEQVPENDIPEQLDSPASQYPMVV.

The segment covering 1–12 has biased composition (acidic residues); it reads MAGDRAEEEEGE. 2 disordered regions span residues 1–21 and 343–363; these read MAGD…ARAA and NGME…ACSS. The U-box domain occupies 272-346; the sequence is TIPDEFRCPI…SQWCETNGME (75 aa). Residues 350–363 show a composition bias toward polar residues; the sequence is RSTQPNKPTPACSS. 6 ARM repeats span residues 398 to 438, 439 to 479, 480 to 520, 521 to 561, 562 to 602, and 603 to 650; these read NANN…NLSI, HEDN…SLSV, IDEY…NLCI, YQGN…ILSS, HPEG…HLCS, and GEHH…FLVQ. Residues 650-667 show a composition bias toward low complexity; sequence QQQEEQESQSQASAQVPP. Residues 650 to 694 are disordered; it reads QQQEEQESQSQASAQVPPQATPEQVPENDIPEQLDSPASQYPMVV.

In terms of assembly, interacts with SPIN1 (via N-terminus). Highly expressed in leaf, at intermediate levels in shoot and weakly in root.

The protein localises to the nucleus. It localises to the cytoplasm. The enzyme catalyses S-ubiquitinyl-[E2 ubiquitin-conjugating enzyme]-L-cysteine + [acceptor protein]-L-lysine = [E2 ubiquitin-conjugating enzyme]-L-cysteine + N(6)-ubiquitinyl-[acceptor protein]-L-lysine.. It functions in the pathway protein modification; protein ubiquitination. Its function is as follows. E3 ubiquitin-protein ligase that negatively regulates programmed cell death and disease resistance. Participates in flowering time control by mediating ubiquitination and subsequent proteasomal degradation of SPIN1. The protein is E3 ubiquitin-protein ligase SPL11 (SPL11) of Oryza sativa subsp. japonica (Rice).